The sequence spans 658 residues: UvrABC system protein B (658 aa).

Residues lysine 25–methionine 178 form the Helicase ATP-binding domain. Glycine 38 to threonine 45 lines the ATP pocket. The short motif at histidine 91–isoleucine 114 is the Beta-hairpin element. The region spanning glutamine 433–arginine 607 is the Helicase C-terminal domain. Residues glutamate 623–leucine 658 form the UVR domain.

Belongs to the UvrB family. In terms of assembly, forms a heterotetramer with UvrA during the search for lesions. Interacts with UvrC in an incision complex.

The protein resides in the cytoplasm. Functionally, the UvrABC repair system catalyzes the recognition and processing of DNA lesions. A damage recognition complex composed of 2 UvrA and 2 UvrB subunits scans DNA for abnormalities. Upon binding of the UvrA(2)B(2) complex to a putative damaged site, the DNA wraps around one UvrB monomer. DNA wrap is dependent on ATP binding by UvrB and probably causes local melting of the DNA helix, facilitating insertion of UvrB beta-hairpin between the DNA strands. Then UvrB probes one DNA strand for the presence of a lesion. If a lesion is found the UvrA subunits dissociate and the UvrB-DNA preincision complex is formed. This complex is subsequently bound by UvrC and the second UvrB is released. If no lesion is found, the DNA wraps around the other UvrB subunit that will check the other stand for damage. This is UvrABC system protein B from Helicobacter pylori (strain HPAG1).